A 214-amino-acid polypeptide reads, in one-letter code: rRNA N(6)-adenosine-methyltransferase metl-5 (214 aa).

Residues Gln25, Thr28, Gly55, Cys58, Asp78, and 106 to 107 (DI) contribute to the S-adenosyl-L-methionine site.

This sequence belongs to the methyltransferase superfamily. PrmA family. Heterodimer; heterodimerizes with TRMT112/C04H5.1.

The enzyme catalyses adenosine in rRNA + S-adenosyl-L-methionine = N(6)-methyladenosine in rRNA + S-adenosyl-L-homocysteine + H(+). Its function is as follows. Catalytic subunit of a heterodimer with TRMT112/C04H5.1, which specifically methylates the 6th position of adenine in position 1717 of 18S rRNA. This Caenorhabditis elegans protein is rRNA N(6)-adenosine-methyltransferase metl-5.